The sequence spans 467 residues: MSAQTLFEKIWNAHLIRTDEDGTSLIYIDRHLVHEVTSPQAFEGLRLAGRKVRHPEATFAVPDHNVPTKDLAGGIKDPVSKLQVDTLASNCQAFGITEFGVGDLRQGVVHVMAPEQGISLPGFTMVCGDSHTATHGAFGALAFGIGTSEVEHVLATQTLMQKKPKTMLIQVEGELPAGSTAKDIILYIIGNIGTAGGTGYVLEFGGSAIQALSMEGRMTVCNMAIEAGARAGMVAVDEKTIAYVQGRPYAPKGEAWEKAVAQWQTLKSDEGAPFDAVVTLDARNIAPQVTWGTSPELVAPVDGCVPNPTDEPNGVKRGAMEKALAYMGLQAGTPMTEIAVDKVFIGSCTNSRIEDLRAAAVAVAGKKVAASIKLALVVPGTGLVKQQAEQEGLDKIFMEAGFEWREPGCSMCLAMNNDVLEPGERCASTSNRNFEGRQGKDSRTHLVSPAMAAAAAIAGHFVDIRNG.

Cys-348, Cys-409, and Cys-412 together coordinate [4Fe-4S] cluster.

This sequence belongs to the aconitase/IPM isomerase family. LeuC type 1 subfamily. Heterodimer of LeuC and LeuD. Requires [4Fe-4S] cluster as cofactor.

The catalysed reaction is (2R,3S)-3-isopropylmalate = (2S)-2-isopropylmalate. The protein operates within amino-acid biosynthesis; L-leucine biosynthesis; L-leucine from 3-methyl-2-oxobutanoate: step 2/4. In terms of biological role, catalyzes the isomerization between 2-isopropylmalate and 3-isopropylmalate, via the formation of 2-isopropylmaleate. The chain is 3-isopropylmalate dehydratase large subunit from Magnetococcus marinus (strain ATCC BAA-1437 / JCM 17883 / MC-1).